A 245-amino-acid chain; its full sequence is MPNYSYNPTIGRTYVYDNKYYKNLGGLIKNAKRKKHLIEHEKEEKQWDLLDNYMVAEDPFLGPGKNQKLTLFKEVRNVKPDTMKLIVNWSGKEFLRETWTRFVEDSFPIVNDQEVMDVYLVANLKPTRPNRCYKFLAQHALRWDEDYVPHEVIRIMEPSYVGMNNEYRISLAKKGGGCPIMNIHSEYTNSFESFVNRVIWENFYKPIVYIGTDSAEEEEILIEVSLVFKIKEFAPDAPLFTGPAY.

This sequence belongs to the polyhedrin family.

Major component of the virus occlusion bodies, which are large proteinaceous structures (polyhedra), that protect the virus from the outside environment for extended periods until they are ingested by insect larvae. This chain is Polyhedrin (PH), found in Bombyx mori nuclear polyhedrosis virus (BmNPV).